Consider the following 317-residue polypeptide: ADIPOR-like receptor IZH1 (317 aa).

The Lumenal portion of the chain corresponds to 1 to 80 (MSEERGMKEQ…FNNESINIYT (80 aa)). N-linked (GlcNAc...) asparagine glycosylation occurs at Asn-73. A helical membrane pass occupies residues 81-101 (HLIPGVAYLVLFLIFADLVLA). Topologically, residues 102–113 (QLLPGLDAGEHR) are cytoplasmic. A helical transmembrane segment spans residues 114 to 136 (MLRFYLLGAFTCLACSSCFHCLK). Residues 137-148 (QHSEPHSRLWSK) lie on the Lumenal side of the membrane. The helical transmembrane segment at 149-169 (VDYLGILAQITCSTISLLYYG) threads the bilayer. Over 170 to 175 (YHSYPS) the chain is Cytoplasmic. A helical transmembrane segment spans residues 176-196 (HFVFFSTLTVALCSACAVLVL). Asn-197 carries an N-linked (GlcNAc...) asparagine glycan. Topologically, residues 197-210 (NDSFNTVAFRPLRA) are lumenal. A helical membrane pass occupies residues 211 to 231 (FLFMAFGLSGVIPVLAGSYQF). Residues 232–243 (GFAEWAARIQLK) lie on the Cytoplasmic side of the membrane. The chain crosses the membrane as a helical span at residues 244–264 (YVLYEAVFYITGALVYGFRIP). Over 265-283 (ERFAPGKFDMVGHSHQIFH) the chain is Lumenal. Residues 284-304 (LLVVLGTLCHFRAVTGSYIFI) traverse the membrane as a helical segment. Over 305–317 (CTGKHYSSLLMFI) the chain is Cytoplasmic.

Belongs to the ADIPOR family.

The protein resides in the endoplasmic reticulum membrane. Functionally, ADIPOR-like receptor involved in zinc metabolism either by altering membrane sterol content or by directly altering cellular zinc levels. This Eremothecium gossypii (strain ATCC 10895 / CBS 109.51 / FGSC 9923 / NRRL Y-1056) (Yeast) protein is ADIPOR-like receptor IZH1 (IZH1).